Reading from the N-terminus, the 66-residue chain is UPF0370 protein YpfN (66 aa).

Residues 4-24 (LAKYWWILVIVFLVGVLLNVI) traverse the membrane as a helical segment. The segment at 39–66 (KPELPPHRDFNDKWDDDDDWPKKDQPKK) is disordered. The segment covering 42–51 (LPPHRDFNDK) has biased composition (basic and acidic residues).

Belongs to the UPF0370 family.

It is found in the cell membrane. This Escherichia coli O139:H28 (strain E24377A / ETEC) protein is UPF0370 protein YpfN.